The sequence spans 134 residues: MARVTVEDCIDKVENRFELVLLASHRARLISQGASITIDRDNDKNPVVALREIADETLSPDDLKEDLIHSLQKHVEVDEPEPDPASMIAAGGAAAADSEEQDDLPETITFDQMSEEELLAGIEGLVPPEKSDDY.

Residues 76-102 are disordered; it reads EVDEPEPDPASMIAAGGAAAADSEEQD.

It belongs to the RNA polymerase subunit omega family. In terms of assembly, the RNAP catalytic core consists of 2 alpha, 1 beta, 1 beta' and 1 omega subunit. When a sigma factor is associated with the core the holoenzyme is formed, which can initiate transcription.

It catalyses the reaction RNA(n) + a ribonucleoside 5'-triphosphate = RNA(n+1) + diphosphate. Its function is as follows. Promotes RNA polymerase assembly. Latches the N- and C-terminal regions of the beta' subunit thereby facilitating its interaction with the beta and alpha subunits. The protein is DNA-directed RNA polymerase subunit omega of Rhizobium etli (strain ATCC 51251 / DSM 11541 / JCM 21823 / NBRC 15573 / CFN 42).